Here is a 194-residue protein sequence, read N- to C-terminus: Holliday junction branch migration complex subunit RuvA (194 aa).

Positions 1–64 are domain I; sequence MISSLNGILE…EDALSLFGFA (64 aa). The segment at 65 to 143 is domain II; sequence TTEELSLFET…KNWEAGVLSQ (79 aa). The flexible linker stretch occupies residues 144–149; the sequence is VTEANS. The tract at residues 149-194 is domain III; sequence SDILATLTALGYSSSEAAKAISSLGDNGDLPLEERIKLALNYFNNK.

Belongs to the RuvA family. As to quaternary structure, homotetramer. Forms an RuvA(8)-RuvB(12)-Holliday junction (HJ) complex. HJ DNA is sandwiched between 2 RuvA tetramers; dsDNA enters through RuvA and exits via RuvB. An RuvB hexamer assembles on each DNA strand where it exits the tetramer. Each RuvB hexamer is contacted by two RuvA subunits (via domain III) on 2 adjacent RuvB subunits; this complex drives branch migration. In the full resolvosome a probable DNA-RuvA(4)-RuvB(12)-RuvC(2) complex forms which resolves the HJ.

Its subcellular location is the cytoplasm. The RuvA-RuvB-RuvC complex processes Holliday junction (HJ) DNA during genetic recombination and DNA repair, while the RuvA-RuvB complex plays an important role in the rescue of blocked DNA replication forks via replication fork reversal (RFR). RuvA specifically binds to HJ cruciform DNA, conferring on it an open structure. The RuvB hexamer acts as an ATP-dependent pump, pulling dsDNA into and through the RuvAB complex. HJ branch migration allows RuvC to scan DNA until it finds its consensus sequence, where it cleaves and resolves the cruciform DNA. This is Holliday junction branch migration complex subunit RuvA from Dehalococcoides mccartyi (strain CBDB1).